A 747-amino-acid polypeptide reads, in one-letter code: Ion-translocating oxidoreductase complex subunit C (747 aa).

4Fe-4S ferredoxin-type domains follow at residues 368–397 (MEPV…QQLY) and 407–436 (KARN…VQYY). Cysteine 377, cysteine 380, cysteine 383, cysteine 387, cysteine 416, cysteine 419, cysteine 422, and cysteine 426 together coordinate [4Fe-4S] cluster. Residues 538 to 564 (VREERARENQTQQETPTVDVPSTELDD) are disordered.

The protein belongs to the 4Fe4S bacterial-type ferredoxin family. RnfC subfamily. As to quaternary structure, the complex is composed of six subunits: RnfA, RnfB, RnfC, RnfD, RnfE and RnfG. The cofactor is [4Fe-4S] cluster.

The protein resides in the cell inner membrane. In terms of biological role, part of a membrane-bound complex that couples electron transfer with translocation of ions across the membrane. In Pectobacterium carotovorum subsp. carotovorum (strain PC1), this protein is Ion-translocating oxidoreductase complex subunit C.